The sequence spans 241 residues: Endo-chitosanase B (241 aa).

Positions 1-17 (MRLSEILAVALVTGATA) are cleaved as a signal peptide. N-linked (GlcNAc...) asparagine glycosylation is present at Asn86.

This sequence belongs to the glycosyl hydrolase 75 family.

It is found in the secreted. It carries out the reaction Endohydrolysis of beta-(1-&gt;4)-linkages between D-glucosamine residues in a partly acetylated chitosan.. Chitosanase catalyzing the endo-type cleavage of chitosan, the deacylated form of chitin. Chitosanase may be crucial in the degradation of the deacetylated portion of chitin in the fungal cell wall. Chitoolisaccharides produced by the hydrolysis of partially N-acetylated chitosan are known to have many biological activities, including antibacterial activity, immune-enhancing effects, and elicitor activity. The sequence is that of Endo-chitosanase B (csnB) from Aspergillus oryzae (strain ATCC 42149 / RIB 40) (Yellow koji mold).